The primary structure comprises 339 residues: Anthranilate phosphoribosyltransferase (339 aa).

Residues Gly81, 84–85 (GD), 91–94 (NIST), 109–117 (KHGNRAASS), and Ser121 each bind 5-phospho-alpha-D-ribose 1-diphosphate. Position 81 (Gly81) interacts with anthranilate. Residue Ser93 coordinates Mg(2+). Asn112 lines the anthranilate pocket. Arg167 serves as a coordination point for anthranilate. The Mg(2+) site is built by Asp226 and Glu227.

Belongs to the anthranilate phosphoribosyltransferase family. In terms of assembly, homodimer. Mg(2+) serves as cofactor.

The enzyme catalyses N-(5-phospho-beta-D-ribosyl)anthranilate + diphosphate = 5-phospho-alpha-D-ribose 1-diphosphate + anthranilate. It functions in the pathway amino-acid biosynthesis; L-tryptophan biosynthesis; L-tryptophan from chorismate: step 2/5. Functionally, catalyzes the transfer of the phosphoribosyl group of 5-phosphorylribose-1-pyrophosphate (PRPP) to anthranilate to yield N-(5'-phosphoribosyl)-anthranilate (PRA). This is Anthranilate phosphoribosyltransferase from Maricaulis maris (strain MCS10) (Caulobacter maris).